The chain runs to 261 residues: Hydroxyethylthiazole kinase (261 aa).

Met-40 contacts substrate. ATP contacts are provided by Lys-116 and Thr-162. Substrate is bound at residue Gly-189.

This sequence belongs to the Thz kinase family. Mg(2+) serves as cofactor.

The catalysed reaction is 5-(2-hydroxyethyl)-4-methylthiazole + ATP = 4-methyl-5-(2-phosphooxyethyl)-thiazole + ADP + H(+). Its pathway is cofactor biosynthesis; thiamine diphosphate biosynthesis; 4-methyl-5-(2-phosphoethyl)-thiazole from 5-(2-hydroxyethyl)-4-methylthiazole: step 1/1. Catalyzes the phosphorylation of the hydroxyl group of 4-methyl-5-beta-hydroxyethylthiazole (THZ). This chain is Hydroxyethylthiazole kinase, found in Methanosarcina acetivorans (strain ATCC 35395 / DSM 2834 / JCM 12185 / C2A).